The chain runs to 611 residues: Probable Xaa-Pro aminopeptidase P (611 aa).

Residues Asp408, Asp419, Glu517, and Glu531 each coordinate Mn(2+).

It belongs to the peptidase M24B family. It depends on Mn(2+) as a cofactor.

The enzyme catalyses Release of any N-terminal amino acid, including proline, that is linked to proline, even from a dipeptide or tripeptide.. In terms of biological role, catalyzes the removal of a penultimate prolyl residue from the N-termini of peptides. The protein is Probable Xaa-Pro aminopeptidase P (AMPP) of Coccidioides posadasii (strain RMSCC 757 / Silveira) (Valley fever fungus).